A 59-amino-acid polypeptide reads, in one-letter code: MAVPKRKVSPHRRGNRRAHDSLKVEAFHECNNCGELKRPHNMCSHCGFYNGREVLAPSL.

Residues 1–16 (MAVPKRKVSPHRRGNR) are compositionally biased toward basic residues. Residues 1–20 (MAVPKRKVSPHRRGNRRAHD) are disordered.

It belongs to the bacterial ribosomal protein bL32 family.

This chain is Large ribosomal subunit protein bL32, found in Erythrobacter litoralis (strain HTCC2594).